Reading from the N-terminus, the 406-residue chain is Succinylornithine transaminase/acetylornithine aminotransferase (406 aa).

Residues 108–109 (GA) and Phe141 contribute to the pyridoxal 5'-phosphate site. Residue Arg144 coordinates N(2)-acetyl-L-ornithine. 226–229 (DEVQ) contributes to the pyridoxal 5'-phosphate binding site. Lys255 carries the post-translational modification N6-(pyridoxal phosphate)lysine. Residue Thr283 coordinates N(2)-acetyl-L-ornithine. Thr284 lines the pyridoxal 5'-phosphate pocket.

This sequence belongs to the class-III pyridoxal-phosphate-dependent aminotransferase family. ArgD subfamily. Homodimer. The cofactor is pyridoxal 5'-phosphate.

It localises to the cytoplasm. The catalysed reaction is N(2)-succinyl-L-ornithine + 2-oxoglutarate = N-succinyl-L-glutamate 5-semialdehyde + L-glutamate. The enzyme catalyses N(2)-acetyl-L-ornithine + 2-oxoglutarate = N-acetyl-L-glutamate 5-semialdehyde + L-glutamate. It participates in amino-acid biosynthesis; L-arginine biosynthesis; N(2)-acetyl-L-ornithine from L-glutamate: step 4/4. The protein operates within amino-acid degradation; L-arginine degradation via AST pathway; L-glutamate and succinate from L-arginine: step 3/5. In terms of biological role, transaminates both N(2)-acetylornithine and N(2)-succinylornithine. The chain is Succinylornithine transaminase/acetylornithine aminotransferase (aruC) from Pseudomonas aeruginosa (strain ATCC 15692 / DSM 22644 / CIP 104116 / JCM 14847 / LMG 12228 / 1C / PRS 101 / PAO1).